The following is a 203-amino-acid chain: Urease accessory protein UreG (203 aa).

Residue 11-18 (GPVGSGKT) coordinates GTP.

The protein belongs to the SIMIBI class G3E GTPase family. UreG subfamily. Homodimer. UreD, UreF and UreG form a complex that acts as a GTP-hydrolysis-dependent molecular chaperone, activating the urease apoprotein by helping to assemble the nickel containing metallocenter of UreC. The UreE protein probably delivers the nickel.

The protein resides in the cytoplasm. Its function is as follows. Facilitates the functional incorporation of the urease nickel metallocenter. This process requires GTP hydrolysis, probably effectuated by UreG. The protein is Urease accessory protein UreG of Prochlorococcus marinus (strain MIT 9301).